The sequence spans 128 residues: NADH-quinone oxidoreductase subunit A (128 aa).

The next 3 helical transmembrane spans lie at 9-29, 68-88, and 96-116; these read FPIAVALLVAVGLAAVMLALA, LLFIVFDIEAIFLYPWAVLLL, and LGWAGYISMGIFVATLVAGLV.

This sequence belongs to the complex I subunit 3 family. In terms of assembly, NDH-1 is composed of 14 different subunits. Subunits NuoA, H, J, K, L, M, N constitute the membrane sector of the complex.

The protein localises to the cell inner membrane. The enzyme catalyses a quinone + NADH + 5 H(+)(in) = a quinol + NAD(+) + 4 H(+)(out). Functionally, NDH-1 shuttles electrons from NADH, via FMN and iron-sulfur (Fe-S) centers, to quinones in the respiratory chain. The immediate electron acceptor for the enzyme in this species is believed to be ubiquinone. Couples the redox reaction to proton translocation (for every two electrons transferred, four hydrogen ions are translocated across the cytoplasmic membrane), and thus conserves the redox energy in a proton gradient. This Anaeromyxobacter sp. (strain Fw109-5) protein is NADH-quinone oxidoreductase subunit A.